We begin with the raw amino-acid sequence, 325 residues long: Aldo-keto reductase family 1 member A1 (325 aa).

Ala2 is subject to N-acetylalanine. Ser4 carries the phosphoserine modification. NADP(+) is bound by residues 11–20 (GQKMPLIGLG), Thr21, and Trp22. A Phosphoserine modification is found at Ser38. Position 45 (Asp45) interacts with NADP(+). Tyr50 (proton donor) is an active-site residue. An N6-acetyllysine; alternate modification is found at Lys127. N6-succinyllysine; alternate is present on Lys127. Lys145 is modified (N6-succinyllysine). Positions 162, 163, 211, 213, 215, 216, 263, 264, 265, 266, 269, 272, and 273 each coordinate NADP(+). At Ser211 the chain carries Phosphoserine.

The protein belongs to the aldo/keto reductase family. Monomer. In terms of tissue distribution, widely expressed. Highly expressed in kidney, salivary gland and liver. Detected in trachea, stomach, brain, lung, prostate, placenta, mammary gland, small intestine and lung.

It localises to the cytoplasm. The protein localises to the cytosol. It is found in the apical cell membrane. The catalysed reaction is a primary alcohol + NADP(+) = an aldehyde + NADPH + H(+). It catalyses the reaction allyl alcohol + NADP(+) = acrolein + NADPH + H(+). The enzyme catalyses glycerol + NADP(+) = D-glyceraldehyde + NADPH + H(+). It carries out the reaction glycerol + NADP(+) = L-glyceraldehyde + NADPH + H(+). The catalysed reaction is hydroxyacetone + NADP(+) = methylglyoxal + NADPH + H(+). It catalyses the reaction a 4-hydroxynonen-1-ol + NADP(+) = a 4-hydroxynonenal + NADPH + H(+). The enzyme catalyses 3-deoxyfructose + NADP(+) = 3-deoxyglucosone + NADPH + H(+). It carries out the reaction L-gulonate + NADP(+) = aldehydo-D-glucuronate + NADPH + H(+). The catalysed reaction is L-gulono-1,4-lactone + NADP(+) = D-glucurono-3,6-lactone + NADPH + H(+). It catalyses the reaction pyridine 3-methanol + NADP(+) = pyridine-3-carbaldehyde + NADPH + H(+). The enzyme catalyses S-nitroso-CoA + NADPH + H(+) = sulfinamide-CoA + NADP(+). It carries out the reaction S-nitrosoglutathione + NADPH + H(+) = S-(hydroxysulfenamide)glutathione + NADP(+). Functionally, catalyzes the NADPH-dependent reduction of a wide variety of carbonyl-containing compounds to their corresponding alcohols. Displays enzymatic activity towards endogenous metabolites such as aromatic and aliphatic aldehydes, ketones, monosaccharides and bile acids, with a preference for negatively charged substrates, such as glucuronate and succinic semialdehyde. Functions as a detoxifiying enzyme by reducing a range of toxic aldehydes. Reduces methylglyoxal and 3-deoxyglucosone, which are present at elevated levels under hyperglycemic conditions and are cytotoxic. Involved also in the detoxification of lipid-derived aldehydes like acrolein. Plays a role in the activation of procarcinogens, such as polycyclic aromatic hydrocarbon trans-dihydrodiols, and in the metabolism of various xenobiotics and drugs, including the anthracyclines doxorubicin (DOX) and daunorubicin (DAUN). Also acts as an inhibitor of protein S-nitrosylation by mediating degradation of S-nitroso-coenzyme A (S-nitroso-CoA), a cofactor required to S-nitrosylate proteins. S-nitroso-CoA reductase activity is involved in reprogramming intermediary metabolism in renal proximal tubules, notably by inhibiting protein S-nitrosylation of isoform 2 of PKM (PKM2). Also acts as a S-nitroso-glutathione reductase by catalyzing the NADPH-dependent reduction of S-nitrosoglutathione. Displays no reductase activity towards retinoids. The sequence is that of Aldo-keto reductase family 1 member A1 (AKR1A1) from Homo sapiens (Human).